The chain runs to 210 residues: N-(5'-phosphoribosyl)anthranilate isomerase (210 aa).

The protein belongs to the TrpF family.

It catalyses the reaction N-(5-phospho-beta-D-ribosyl)anthranilate = 1-(2-carboxyphenylamino)-1-deoxy-D-ribulose 5-phosphate. It participates in amino-acid biosynthesis; L-tryptophan biosynthesis; L-tryptophan from chorismate: step 3/5. This is N-(5'-phosphoribosyl)anthranilate isomerase from Methanococcus aeolicus (strain ATCC BAA-1280 / DSM 17508 / OCM 812 / Nankai-3).